We begin with the raw amino-acid sequence, 531 residues long: 2,3-bisphosphoglycerate-independent phosphoglycerate mutase (531 aa).

Mn(2+) is bound by residues Asp-13 and Ser-63. Residue Ser-63 is the Phosphoserine intermediate of the active site. Substrate-binding positions include His-124, 154 to 155, Arg-187, Arg-193, 261 to 264, and Lys-342; these read RD and RPDR. Residues Asp-420, His-424, Asp-462, His-463, and His-480 each coordinate Mn(2+).

This sequence belongs to the BPG-independent phosphoglycerate mutase family. Monomer. It depends on Mn(2+) as a cofactor.

It carries out the reaction (2R)-2-phosphoglycerate = (2R)-3-phosphoglycerate. It functions in the pathway carbohydrate degradation; glycolysis; pyruvate from D-glyceraldehyde 3-phosphate: step 3/5. Its function is as follows. Catalyzes the interconversion of 2-phosphoglycerate and 3-phosphoglycerate. In Mycoplasma mycoides subsp. mycoides SC (strain CCUG 32753 / NCTC 10114 / PG1), this protein is 2,3-bisphosphoglycerate-independent phosphoglycerate mutase.